We begin with the raw amino-acid sequence, 494 residues long: Glycerol kinase (494 aa).

Thr-13 is a binding site for ADP. ATP is bound by residues Thr-13, Thr-14, and Ser-15. Thr-13 provides a ligand contact to sn-glycerol 3-phosphate. Arg-17 contributes to the ADP binding site. The sn-glycerol 3-phosphate site is built by Arg-83, Glu-84, Tyr-135, and Asp-244. Glycerol contacts are provided by Arg-83, Glu-84, Tyr-135, Asp-244, and Gln-245. 2 residues coordinate ADP: Thr-266 and Gly-309. Thr-266, Gly-309, Gln-313, and Gly-410 together coordinate ATP. ADP is bound by residues Gly-410 and Asn-414.

Belongs to the FGGY kinase family.

It catalyses the reaction glycerol + ATP = sn-glycerol 3-phosphate + ADP + H(+). Its pathway is polyol metabolism; glycerol degradation via glycerol kinase pathway; sn-glycerol 3-phosphate from glycerol: step 1/1. Inhibited by fructose 1,6-bisphosphate (FBP). Key enzyme in the regulation of glycerol uptake and metabolism. Catalyzes the phosphorylation of glycerol to yield sn-glycerol 3-phosphate. The chain is Glycerol kinase from Shewanella putrefaciens (strain CN-32 / ATCC BAA-453).